Here is a 154-residue protein sequence, read N- to C-terminus: 6,7-dimethyl-8-ribityllumazine synthase (154 aa).

5-amino-6-(D-ribitylamino)uracil contacts are provided by residues 22 to 23 (FN), 56 to 58 (AFE), and 80 to 82 (TVI). 85-86 (AT) is a (2S)-2-hydroxy-3-oxobutyl phosphate binding site. The Proton donor role is filled by histidine 88. Phenylalanine 113 is a binding site for 5-amino-6-(D-ribitylamino)uracil. Arginine 127 provides a ligand contact to (2S)-2-hydroxy-3-oxobutyl phosphate.

Belongs to the DMRL synthase family. Forms an icosahedral capsid composed of 60 subunits, arranged as a dodecamer of pentamers. Can interact with riboflavin synthase, forming a lumazine synthase/riboflavin synthase complex, also designated as 'heavy riboflavin synthase complex', which consists of a trimer of riboflavin synthase enclosed within the icosahedral structure composed of 60 subunits of 6,7-dimethyl-8-ribityllumazine synthase.

The catalysed reaction is (2S)-2-hydroxy-3-oxobutyl phosphate + 5-amino-6-(D-ribitylamino)uracil = 6,7-dimethyl-8-(1-D-ribityl)lumazine + phosphate + 2 H2O + H(+). The protein operates within cofactor biosynthesis; riboflavin biosynthesis; riboflavin from 2-hydroxy-3-oxobutyl phosphate and 5-amino-6-(D-ribitylamino)uracil: step 1/2. Its function is as follows. Catalyzes the formation of 6,7-dimethyl-8-ribityllumazine by condensation of 5-amino-6-(D-ribitylamino)uracil with 3,4-dihydroxy-2-butanone 4-phosphate. This is the penultimate step in the biosynthesis of riboflavin. Is able to use the non-natural R enantiomer of 3,4-dihydroxy-2-butanone 4-phosphate as a substrate, but with less efficiency than the natural S enantiomer. Cannot use unphosphorylated 3,4-dihydroxy-2-butanone, 3,4-dihydroxy-2-butanone 3-phosphate or diacetyl as substrates. The polypeptide is 6,7-dimethyl-8-ribityllumazine synthase (ribH) (Bacillus subtilis (strain 168)).